The sequence spans 1120 residues: DNA-directed RNA polymerase subunit beta (1120 aa).

It belongs to the RNA polymerase beta chain family. In plastids the minimal PEP RNA polymerase catalytic core is composed of four subunits: alpha, beta, beta', and beta''. When a (nuclear-encoded) sigma factor is associated with the core the holoenzyme is formed, which can initiate transcription.

It localises to the plastid. The protein resides in the chloroplast. The enzyme catalyses RNA(n) + a ribonucleoside 5'-triphosphate = RNA(n+1) + diphosphate. DNA-dependent RNA polymerase catalyzes the transcription of DNA into RNA using the four ribonucleoside triphosphates as substrates. The polypeptide is DNA-directed RNA polymerase subunit beta (Gracilaria tenuistipitata var. liui (Red alga)).